The primary structure comprises 276 residues: Large ribosomal subunit protein uL2 (276 aa).

2 disordered regions span residues 1-58 (MAIR…GGGH) and 218-276 (RPIT…KNRK). A compositionally biased stretch (polar residues) spans 16–27 (ASVSDFSDLTRS). Residues 255-276 (RRPKKASNKMIVRRRPNGKNRK) show a composition bias toward basic residues.

This sequence belongs to the universal ribosomal protein uL2 family. In terms of assembly, part of the 50S ribosomal subunit. Forms a bridge to the 30S subunit in the 70S ribosome.

One of the primary rRNA binding proteins. Required for association of the 30S and 50S subunits to form the 70S ribosome, for tRNA binding and peptide bond formation. It has been suggested to have peptidyltransferase activity; this is somewhat controversial. Makes several contacts with the 16S rRNA in the 70S ribosome. The polypeptide is Large ribosomal subunit protein uL2 (Bifidobacterium animalis subsp. lactis (strain AD011)).